A 303-amino-acid polypeptide reads, in one-letter code: Oxygen-dependent coproporphyrinogen-III oxidase (303 aa).

Ser-93 contributes to the substrate binding site. The a divalent metal cation site is built by His-97 and His-107. The active-site Proton donor is His-107. 109 to 111 lines the substrate pocket; the sequence is NVR. A divalent metal cation contacts are provided by His-149 and His-179. Residues 244 to 279 are important for dimerization; that stretch reads YVEFNLVFDRGTLFGLQSGGRTESILLSMPPMAQWR. 262-264 is a substrate binding site; that stretch reads GGR.

It belongs to the aerobic coproporphyrinogen-III oxidase family. As to quaternary structure, homodimer. A divalent metal cation is required as a cofactor.

It localises to the cytoplasm. It carries out the reaction coproporphyrinogen III + O2 + 2 H(+) = protoporphyrinogen IX + 2 CO2 + 2 H2O. Its pathway is porphyrin-containing compound metabolism; protoporphyrin-IX biosynthesis; protoporphyrinogen-IX from coproporphyrinogen-III (O2 route): step 1/1. Involved in the heme biosynthesis. Catalyzes the aerobic oxidative decarboxylation of propionate groups of rings A and B of coproporphyrinogen-III to yield the vinyl groups in protoporphyrinogen-IX. The polypeptide is Oxygen-dependent coproporphyrinogen-III oxidase (Bordetella petrii (strain ATCC BAA-461 / DSM 12804 / CCUG 43448)).